The sequence spans 442 residues: Histidine--tRNA ligase (442 aa).

It belongs to the class-II aminoacyl-tRNA synthetase family. Homodimer.

Its subcellular location is the cytoplasm. It carries out the reaction tRNA(His) + L-histidine + ATP = L-histidyl-tRNA(His) + AMP + diphosphate + H(+). This chain is Histidine--tRNA ligase, found in Helicobacter acinonychis (strain Sheeba).